The primary structure comprises 289 residues: Lipoyl synthase (289 aa).

Positions 33, 38, 44, 59, 63, 66, and 274 each coordinate [4Fe-4S] cluster. The Radical SAM core domain occupies 45–263; the sequence is FAGGTATFLI…SQGESELGFL (219 aa).

Belongs to the radical SAM superfamily. Lipoyl synthase family. Requires [4Fe-4S] cluster as cofactor.

The protein localises to the cytoplasm. The catalysed reaction is [[Fe-S] cluster scaffold protein carrying a second [4Fe-4S](2+) cluster] + N(6)-octanoyl-L-lysyl-[protein] + 2 oxidized [2Fe-2S]-[ferredoxin] + 2 S-adenosyl-L-methionine + 4 H(+) = [[Fe-S] cluster scaffold protein] + N(6)-[(R)-dihydrolipoyl]-L-lysyl-[protein] + 4 Fe(3+) + 2 hydrogen sulfide + 2 5'-deoxyadenosine + 2 L-methionine + 2 reduced [2Fe-2S]-[ferredoxin]. The protein operates within protein modification; protein lipoylation via endogenous pathway; protein N(6)-(lipoyl)lysine from octanoyl-[acyl-carrier-protein]: step 2/2. Its function is as follows. Catalyzes the radical-mediated insertion of two sulfur atoms into the C-6 and C-8 positions of the octanoyl moiety bound to the lipoyl domains of lipoate-dependent enzymes, thereby converting the octanoylated domains into lipoylated derivatives. This chain is Lipoyl synthase, found in Synechococcus sp. (strain RCC307).